The primary structure comprises 124 residues: Large ribosomal subunit protein eL31 (124 aa).

Belongs to the eukaryotic ribosomal protein eL31 family.

This Aedes aegypti (Yellowfever mosquito) protein is Large ribosomal subunit protein eL31 (RpL31).